A 553-amino-acid polypeptide reads, in one-letter code: Glutamine--tRNA ligase (553 aa).

The 'HIGH' region signature appears at 34 to 44 (PEPNGYLHIGH). ATP-binding positions include 35 to 37 (EPN) and 41 to 47 (HIGHAKS). L-glutamine contacts are provided by Asp67 and Tyr212. ATP is bound by residues Thr231, 261-262 (RL), and 269-271 (MSK). A 'KMSKS' region motif is present at residues 268 to 272 (IMSKR).

The protein belongs to the class-I aminoacyl-tRNA synthetase family. Monomer.

Its subcellular location is the cytoplasm. The enzyme catalyses tRNA(Gln) + L-glutamine + ATP = L-glutaminyl-tRNA(Gln) + AMP + diphosphate. The protein is Glutamine--tRNA ligase of Tolumonas auensis (strain DSM 9187 / NBRC 110442 / TA 4).